Reading from the N-terminus, the 186-residue chain is Lipid A palmitoyltransferase PagP (186 aa).

A signal peptide spans 1-25 (MNVSKYVAIFFFVFIQLISVGKVFA). Residues H58, D101, and S102 contribute to the active site.

Belongs to the lipid A palmitoyltransferase family. In terms of assembly, homodimer.

The protein localises to the cell outer membrane. The catalysed reaction is lipid A (E. coli) + a 1-hexadecanoyl-2-acyl-sn-glycero-3-phosphocholine = hepta-acyl lipid A (E. coli) + a 2-acyl-sn-glycero-3-phosphocholine. It catalyses the reaction lipid IIA + a 1-hexadecanoyl-2-acyl-sn-glycero-3-phosphocholine = lipid IIB + a 2-acyl-sn-glycero-3-phosphocholine. The enzyme catalyses lipid IVA (E. coli) + a 1-hexadecanoyl-2-acyl-sn-glycero-3-phosphocholine = lipid IVB (E. coli) + a 2-acyl-sn-glycero-3-phosphocholine. In terms of biological role, transfers a palmitate residue from the sn-1 position of a phospholipid to the N-linked hydroxymyristate on the proximal unit of lipid A or its precursors. The polypeptide is Lipid A palmitoyltransferase PagP (Escherichia coli O6:H1 (strain CFT073 / ATCC 700928 / UPEC)).